The following is an 86-amino-acid chain: Large ribosomal subunit protein bL27 (86 aa).

The protein belongs to the bacterial ribosomal protein bL27 family.

The sequence is that of Large ribosomal subunit protein bL27 from Koribacter versatilis (strain Ellin345).